Consider the following 340-residue polypeptide: Ketol-acid reductoisomerase (NADP(+)) (340 aa).

Residues 3–183 form the KARI N-terminal Rossmann domain; sequence INVFYDKDCN…GGGRTGIIET (181 aa). NADP(+) is bound by residues 26-29, R49, S54, and 84-87; these read FGSQ and DENQ. H109 is a catalytic residue. G135 is an NADP(+) binding site. The 146-residue stretch at 184-329 folds into the KARI C-terminal knotted domain; sequence TFKDETETDL…VKLRNMMPWI (146 aa). Residues D192, E196, E228, and E232 each coordinate Mg(2+). S253 serves as a coordination point for substrate.

The protein belongs to the ketol-acid reductoisomerase family. The cofactor is Mg(2+).

The enzyme catalyses (2R)-2,3-dihydroxy-3-methylbutanoate + NADP(+) = (2S)-2-acetolactate + NADPH + H(+). The catalysed reaction is (2R,3R)-2,3-dihydroxy-3-methylpentanoate + NADP(+) = (S)-2-ethyl-2-hydroxy-3-oxobutanoate + NADPH + H(+). Its pathway is amino-acid biosynthesis; L-isoleucine biosynthesis; L-isoleucine from 2-oxobutanoate: step 2/4. It functions in the pathway amino-acid biosynthesis; L-valine biosynthesis; L-valine from pyruvate: step 2/4. Its function is as follows. Involved in the biosynthesis of branched-chain amino acids (BCAA). Catalyzes an alkyl-migration followed by a ketol-acid reduction of (S)-2-acetolactate (S2AL) to yield (R)-2,3-dihydroxy-isovalerate. In the isomerase reaction, S2AL is rearranged via a Mg-dependent methyl migration to produce 3-hydroxy-3-methyl-2-ketobutyrate (HMKB). In the reductase reaction, this 2-ketoacid undergoes a metal-dependent reduction by NADPH to yield (R)-2,3-dihydroxy-isovalerate. This Aliarcobacter butzleri (strain RM4018) (Arcobacter butzleri) protein is Ketol-acid reductoisomerase (NADP(+)).